The primary structure comprises 697 residues: Elongation factor G 2 (697 aa).

The region spanning 5–280 is the tr-type G domain; it reads SKYRNIGIFA…AVVDYLPAPD (276 aa). Residues 14 to 21, 78 to 82, and 132 to 135 each bind GTP; these read AHVDAGKT, DTPGH, and NKLD.

It belongs to the TRAFAC class translation factor GTPase superfamily. Classic translation factor GTPase family. EF-G/EF-2 subfamily.

Its subcellular location is the cytoplasm. Functionally, catalyzes the GTP-dependent ribosomal translocation step during translation elongation. During this step, the ribosome changes from the pre-translocational (PRE) to the post-translocational (POST) state as the newly formed A-site-bound peptidyl-tRNA and P-site-bound deacylated tRNA move to the P and E sites, respectively. Catalyzes the coordinated movement of the two tRNA molecules, the mRNA and conformational changes in the ribosome. This is Elongation factor G 2 from Shewanella denitrificans (strain OS217 / ATCC BAA-1090 / DSM 15013).